A 213-amino-acid polypeptide reads, in one-letter code: Small ribosomal subunit protein uS5 (213 aa).

Residues 49-112 (LEEEVMDVNL…DNAKYNLIKV (64 aa)) enclose the S5 DRBM domain.

This sequence belongs to the universal ribosomal protein uS5 family. Part of the 30S ribosomal subunit. Contacts protein S4.

Functionally, with S4 and S12 plays an important role in translational accuracy. The sequence is that of Small ribosomal subunit protein uS5 from Methanobrevibacter smithii (strain ATCC 35061 / DSM 861 / OCM 144 / PS).